The primary structure comprises 297 residues: MTDIAATAEMQAALLSRALPYMQRYEHKTVVVKYGGHAMGDIELGKAFARDIALLKQSGVNPIVVHGGGPQIGAMLTKMGIESKFEGGLRVTDQKTVEIVEMVLAGSINKEIVALINAEGEWAIGLCGKDGNMVFAEKARKTMIDPDSNIERVLDLGFVGEPVEVDRTLLDLLARSEMIPVLAPVAPGRDGHTYNINADTFAGAIAGACKASRLLFLTDVPGVLDKNKKLIDELTVAEAKALIKDGTVSGGMIPKVETCIEAIERGVEGVVILNGKTPHAVLLELFTEHGAGTLIVP.

Residues 68 to 69 (GG), Arg90, and Asn195 each bind substrate.

The protein belongs to the acetylglutamate kinase family. ArgB subfamily.

The protein localises to the cytoplasm. It carries out the reaction N-acetyl-L-glutamate + ATP = N-acetyl-L-glutamyl 5-phosphate + ADP. It functions in the pathway amino-acid biosynthesis; L-arginine biosynthesis; N(2)-acetyl-L-ornithine from L-glutamate: step 2/4. In terms of biological role, catalyzes the ATP-dependent phosphorylation of N-acetyl-L-glutamate. This chain is Acetylglutamate kinase, found in Mesorhizobium japonicum (strain LMG 29417 / CECT 9101 / MAFF 303099) (Mesorhizobium loti (strain MAFF 303099)).